The following is a 448-amino-acid chain: StAR-related lipid transfer protein 3 (448 aa).

In terms of domain architecture, MENTAL spans 47 to 219 (FSDVRRTFCL…YSPPESLAGS (173 aa)). The next 4 helical transmembrane spans lie at 53–73 (TFCL…IIEL), 96–116 (FFDI…GYAA), 122–142 (WWVI…KVIL), and 150–170 (AFGY…TWFL). Positions 208–214 (QFYSPPE) match the FFAT motif. Positions 232 to 445 (AVTEQEKAFV…LRQRINEVHV (214 aa)) constitute an START domain.

The protein belongs to the STARD3 family. As to quaternary structure, homodimer. Phosphorylated. Phosphorylation allows the tethering of two membranes that participates in the formation of ER-endosome contacts. Phosphorylation of FFAT motif drives membrane tethering between the endoplasmic reticulum and late endosomes that in turn allows the efficient transport of sterol mediated by the START domain.

It is found in the late endosome membrane. The enzyme catalyses cholesterol(in) = cholesterol(out). Sterol-binding protein that mediates cholesterol transport from the endoplasmic reticulum to endosomes. The sterol transport mechanism is triggered by phosphorylation of FFAT motif that leads to membrane tethering between the endoplasmic reticulum and late endosomes. Acts as a lipid transfer protein that redirects sterol to the endosome at the expense of the cell membrane and favors membrane formation inside endosomes. The chain is StAR-related lipid transfer protein 3 from Danio rerio (Zebrafish).